The sequence spans 192 residues: Probable nicotinate-nucleotide adenylyltransferase (192 aa).

Belongs to the NadD family.

It catalyses the reaction nicotinate beta-D-ribonucleotide + ATP + H(+) = deamido-NAD(+) + diphosphate. It participates in cofactor biosynthesis; NAD(+) biosynthesis; deamido-NAD(+) from nicotinate D-ribonucleotide: step 1/1. In terms of biological role, catalyzes the reversible adenylation of nicotinate mononucleotide (NaMN) to nicotinic acid adenine dinucleotide (NaAD). The polypeptide is Probable nicotinate-nucleotide adenylyltransferase (Shouchella clausii (strain KSM-K16) (Alkalihalobacillus clausii)).